Consider the following 343-residue polypeptide: 3-dehydroquinate synthase (343 aa).

NAD(+)-binding positions include 61-66 (SGEKYK), 95-99 (GVISD), 119-120 (TT), Lys-132, Lys-141, and 159-162 (FLKT). 3 residues coordinate Zn(2+): Glu-174, His-231, and His-248.

This sequence belongs to the sugar phosphate cyclases superfamily. Dehydroquinate synthase family. Requires NAD(+) as cofactor. It depends on Co(2+) as a cofactor. Zn(2+) serves as cofactor.

The protein resides in the cytoplasm. It carries out the reaction 7-phospho-2-dehydro-3-deoxy-D-arabino-heptonate = 3-dehydroquinate + phosphate. It participates in metabolic intermediate biosynthesis; chorismate biosynthesis; chorismate from D-erythrose 4-phosphate and phosphoenolpyruvate: step 2/7. Functionally, catalyzes the conversion of 3-deoxy-D-arabino-heptulosonate 7-phosphate (DAHP) to dehydroquinate (DHQ). In Helicobacter pylori (strain J99 / ATCC 700824) (Campylobacter pylori J99), this protein is 3-dehydroquinate synthase.